The following is a 153-amino-acid chain: 3-hydroxyacyl-[acyl-carrier-protein] dehydratase FabZ (153 aa).

The active site involves His57.

It belongs to the thioester dehydratase family. FabZ subfamily.

The protein localises to the cytoplasm. The catalysed reaction is a (3R)-hydroxyacyl-[ACP] = a (2E)-enoyl-[ACP] + H2O. Its function is as follows. Involved in unsaturated fatty acids biosynthesis. Catalyzes the dehydration of short chain beta-hydroxyacyl-ACPs and long chain saturated and unsaturated beta-hydroxyacyl-ACPs. This is 3-hydroxyacyl-[acyl-carrier-protein] dehydratase FabZ from Xanthomonas oryzae pv. oryzae (strain MAFF 311018).